A 222-amino-acid chain; its full sequence is Probable transaldolase 2 (222 aa).

Lys90 acts as the Schiff-base intermediate with substrate in catalysis.

This sequence belongs to the transaldolase family. Type 3B subfamily.

The protein resides in the cytoplasm. The enzyme catalyses D-sedoheptulose 7-phosphate + D-glyceraldehyde 3-phosphate = D-erythrose 4-phosphate + beta-D-fructose 6-phosphate. It participates in carbohydrate degradation; pentose phosphate pathway; D-glyceraldehyde 3-phosphate and beta-D-fructose 6-phosphate from D-ribose 5-phosphate and D-xylulose 5-phosphate (non-oxidative stage): step 2/3. Transaldolase is important for the balance of metabolites in the pentose-phosphate pathway. This chain is Probable transaldolase 2, found in Bacillus anthracis.